Reading from the N-terminus, the 444-residue chain is Exodeoxyribonuclease 7 large subunit (444 aa).

Belongs to the XseA family. In terms of assembly, heterooligomer composed of large and small subunits.

The protein resides in the cytoplasm. The enzyme catalyses Exonucleolytic cleavage in either 5'- to 3'- or 3'- to 5'-direction to yield nucleoside 5'-phosphates.. Bidirectionally degrades single-stranded DNA into large acid-insoluble oligonucleotides, which are then degraded further into small acid-soluble oligonucleotides. This chain is Exodeoxyribonuclease 7 large subunit, found in Hahella chejuensis (strain KCTC 2396).